A 271-amino-acid polypeptide reads, in one-letter code: RELT-like protein 1 (271 aa).

The signal sequence occupies residues 1-23 (MAPRALPGSAVLAAAVFVGGAVS). Residues 24 to 57 (SPLVAPDNGSSRTLHSRTETTPSPSNDTGNGHPE) are Extracellular-facing. The segment at 28-53 (APDNGSSRTLHSRTETTPSPSNDTGN) is disordered. 2 N-linked (GlcNAc...) asparagine glycosylation sites follow: Asn31 and Asn49. Residues 31-52 (NGSSRTLHSRTETTPSPSNDTG) are compositionally biased toward polar residues. Residues 58 to 78 (YIAYALVPVFFIMGLFGVLIC) traverse the membrane as a helical segment. At 79–271 (HLLKKKGYRC…PVKRERSGTE (193 aa)) the chain is on the cytoplasmic side. Positions 89–113 (TTEAEQDIEEEKVEKIELNDSVNEN) form a coiled coil. 2 positions are modified to phosphoserine: Ser109 and Ser114. Disordered regions lie at residues 145–173 (DPESPVTPSTPGSPPVSPGPLSPGGTPGK) and 233–271 (VEHKSNQKERRSLMSVSGAETVNGEVPATPVKRERSGTE). The segment covering 155–165 (PGSPPVSPGPL) has biased composition (pro residues). Residues 233 to 244 (VEHKSNQKERRS) show a composition bias toward basic and acidic residues. Residues Ser244 and Ser247 each carry the phosphoserine modification.

It belongs to the RELT family. As to quaternary structure, interacts with RELT, RELL2 and OXSR1. Interacts with PLSCR1. In terms of processing, phosphorylated in vitro by OXSR1. In terms of tissue distribution, widely expressed. Expressed at highest levels in the placenta, skeletal muscle, spleen and testis.

The protein localises to the cell membrane. In terms of biological role, induces activation of MAPK14/p38 cascade, when overexpressed. Induces apoptosis, when overexpressed. This Homo sapiens (Human) protein is RELT-like protein 1 (RELL1).